The sequence spans 534 residues: Cytochrome P450 monooxygenase AN1598 (534 aa).

N3 carries N-linked (GlcNAc...) asparagine glycosylation. The chain crosses the membrane as a helical span at residues 25–45; that stretch reads LYLEILGVLSVVYLLQTLVAY. N95 carries an N-linked (GlcNAc...) asparagine glycan. C464 provides a ligand contact to heme. N-linked (GlcNAc...) asparagine glycosylation is present at N498.

It belongs to the cytochrome P450 family. Heme serves as cofactor.

The protein localises to the membrane. It participates in secondary metabolite biosynthesis; terpenoid biosynthesis. Functionally, bifunctional terpene synthase; part of the gene cluster that mediates the biosynthesis of the diterpene ent-pimara-8(14),15-diene (PD). Within the cluster, the HMG-CoA reductase AN1593 functions in the mevalonate pathway, which produces isoprenoid precursors. The geranylgeranyl pyrophosphate (GGPP) synthase AN1592 is needed in the formation of GGPP, the precursor for diterpenes. Lastly, the pimaradiene synthase pbcA performs the 2 cyclization steps that convert GGPP to ent-pimara-8(14),15-diene. The putative roles of the remaining cluster enzymes in ent-pimara-8(14),15-diene biosynthesis is unclear. The cytochrome P450 monooxygenase AN1598, the glutathione S-transferase AN1595, the oxidoreductases AN1596 and AN1597 probably function as decorative enzymes. It is possible that in biological conditions the compound is oxidized to ent-pimara-8(14),15-dien-19-oic acid, which is a bioactive diterpene compound predominant in many plant extracts. The polypeptide is Cytochrome P450 monooxygenase AN1598 (Emericella nidulans (strain FGSC A4 / ATCC 38163 / CBS 112.46 / NRRL 194 / M139) (Aspergillus nidulans)).